We begin with the raw amino-acid sequence, 360 residues long: Heat-inducible transcription repressor HrcA (360 aa).

The protein belongs to the HrcA family.

Its function is as follows. Negative regulator of class I heat shock genes (grpE-dnaK-dnaJ and groELS operons). Prevents heat-shock induction of these operons. This chain is Heat-inducible transcription repressor HrcA, found in Gloeobacter violaceus (strain ATCC 29082 / PCC 7421).